Here is a 129-residue protein sequence, read N- to C-terminus: Intraflagellar transport protein 20 homolog (129 aa).

Residues 89–121 (VLLQMTIRELTVEKERLRVELEAVRKIEKEQDE) adopt a coiled-coil conformation.

In terms of assembly, component of the IFT complex B composed of at least che-2, che-13, dyf-1, dyf-3, dyf-6, dyf-11, dyf-13, ift-20, ift-74, ift-81, ifta-2, osm-1, osm-5 and osm-6.

The protein localises to the cell projection. The protein resides in the cilium. In terms of biological role, component of the intraflagellar transport (IFT) complex B required for transport of proteins in the motile cilium. Required for ciliary entrance and transport of specific ciliary cargo proteins such as che-3 which are related to motility. This chain is Intraflagellar transport protein 20 homolog, found in Caenorhabditis elegans.